We begin with the raw amino-acid sequence, 141 residues long: uncharacterized protein (141 aa).

A run of 2 helical transmembrane segments spans residues 20–42 and 52–74; these read FLVN…FCLA and LHLC…IFTL.

It localises to the cell membrane. This is an uncharacterized protein from Archaeoglobus fulgidus (strain ATCC 49558 / DSM 4304 / JCM 9628 / NBRC 100126 / VC-16).